The chain runs to 146 residues: Small ribosomal subunit protein uS15 (146 aa).

This sequence belongs to the universal ribosomal protein uS15 family. Part of the 30S ribosomal subunit.

This Picrophilus torridus (strain ATCC 700027 / DSM 9790 / JCM 10055 / NBRC 100828 / KAW 2/3) protein is Small ribosomal subunit protein uS15.